Consider the following 221-residue polypeptide: Probable N-acetyl-alpha-D-glucosaminyl L-malate deacetylase 2 (221 aa).

Zn(2+)-binding residues include histidine 11, aspartate 14, and histidine 125.

This sequence belongs to the PIGL family. It depends on Zn(2+) as a cofactor.

It catalyses the reaction (S)-malyl N-acetyl-alpha-D-glucosaminide + H2O = (S)-malyl alpha-D-glucosaminide + acetate. Involved in bacillithiol (BSH) biosynthesis. Catalyzes the second step of the pathway, the deacetylation of N-acetylglucosaminylmalate (GlcNAc-Mal) to glucosamine malate (GlcN-Mal). This chain is Probable N-acetyl-alpha-D-glucosaminyl L-malate deacetylase 2, found in Bacillus subtilis (strain 168).